The following is a 387-amino-acid chain: Mannitol-1-phosphate 5-dehydrogenase (387 aa).

3–14 (ALHFGAGNIGRG) is an NAD(+) binding site.

This sequence belongs to the mannitol dehydrogenase family.

The catalysed reaction is D-mannitol 1-phosphate + NAD(+) = beta-D-fructose 6-phosphate + NADH + H(+). The sequence is that of Mannitol-1-phosphate 5-dehydrogenase from Yersinia pseudotuberculosis serotype O:3 (strain YPIII).